We begin with the raw amino-acid sequence, 115 residues long: Ribonuclease P protein component (115 aa).

This sequence belongs to the RnpA family. Consists of a catalytic RNA component (M1 or rnpB) and a protein subunit.

It carries out the reaction Endonucleolytic cleavage of RNA, removing 5'-extranucleotides from tRNA precursor.. Functionally, RNaseP catalyzes the removal of the 5'-leader sequence from pre-tRNA to produce the mature 5'-terminus. It can also cleave other RNA substrates such as 4.5S RNA. The protein component plays an auxiliary but essential role in vivo by binding to the 5'-leader sequence and broadening the substrate specificity of the ribozyme. The chain is Ribonuclease P protein component from Blochmanniella pennsylvanica (strain BPEN).